The following is a 70-amino-acid chain: MILYPSIVDLMEKVDSKYTLCSLVAKRARQLIAGDTKLVDIDSDKPVTIATEEVNNGLITYQRPKKYGIK.

Belongs to the RNA polymerase subunit omega family. As to quaternary structure, the RNAP catalytic core consists of 2 alpha, 1 beta, 1 beta' and 1 omega subunit. When a sigma factor is associated with the core the holoenzyme is formed, which can initiate transcription.

It catalyses the reaction RNA(n) + a ribonucleoside 5'-triphosphate = RNA(n+1) + diphosphate. In terms of biological role, promotes RNA polymerase assembly. Latches the N- and C-terminal regions of the beta' subunit thereby facilitating its interaction with the beta and alpha subunits. The protein is DNA-directed RNA polymerase subunit omega of Thermoanaerobacter pseudethanolicus (strain ATCC 33223 / 39E) (Clostridium thermohydrosulfuricum).